Here is a 147-residue protein sequence, read N- to C-terminus: Deoxyuridine 5'-triphosphate nucleotidohydrolase (147 aa).

Residues 67-69 (RSG), Asn-80, and 84-86 (TID) contribute to the substrate site.

The protein belongs to the dUTPase family. Requires Mg(2+) as cofactor.

The catalysed reaction is dUTP + H2O = dUMP + diphosphate + H(+). The protein operates within pyrimidine metabolism; dUMP biosynthesis; dUMP from dCTP (dUTP route): step 2/2. Its function is as follows. This enzyme is involved in nucleotide metabolism: it produces dUMP, the immediate precursor of thymidine nucleotides and it decreases the intracellular concentration of dUTP so that uracil cannot be incorporated into DNA. The sequence is that of Deoxyuridine 5'-triphosphate nucleotidohydrolase from Anaeromyxobacter dehalogenans (strain 2CP-C).